The chain runs to 364 residues: Peptide chain release factor 2 (364 aa).

N5-methylglutamine is present on Gln-251.

The protein belongs to the prokaryotic/mitochondrial release factor family. Post-translationally, methylated by PrmC. Methylation increases the termination efficiency of RF2.

It is found in the cytoplasm. Peptide chain release factor 2 directs the termination of translation in response to the peptide chain termination codons UGA and UAA. The protein is Peptide chain release factor 2 of Sulfurovum sp. (strain NBC37-1).